We begin with the raw amino-acid sequence, 225 residues long: Octanoyltransferase (225 aa).

The BPL/LPL catalytic domain occupies 31 to 214 (ENTCDEVWLV…ELTTLLDYTD (184 aa)). Substrate-binding positions include 70-77 (RGGQVTYH), 137-139 (SLG), and 150-152 (GLA). Residue Cys168 is the Acyl-thioester intermediate of the active site.

It belongs to the LipB family.

The protein localises to the cytoplasm. The enzyme catalyses octanoyl-[ACP] + L-lysyl-[protein] = N(6)-octanoyl-L-lysyl-[protein] + holo-[ACP] + H(+). It functions in the pathway protein modification; protein lipoylation via endogenous pathway; protein N(6)-(lipoyl)lysine from octanoyl-[acyl-carrier-protein]: step 1/2. In terms of biological role, catalyzes the transfer of endogenously produced octanoic acid from octanoyl-acyl-carrier-protein onto the lipoyl domains of lipoate-dependent enzymes. Lipoyl-ACP can also act as a substrate although octanoyl-ACP is likely to be the physiological substrate. This is Octanoyltransferase from Aliivibrio fischeri (strain ATCC 700601 / ES114) (Vibrio fischeri).